We begin with the raw amino-acid sequence, 337 residues long: MNEPLDYLANASDFPDYAAAFGNCTDENIPLKMHYLPVIYGIIFLVGFPGNAVVISTYIFKMRPWKSSTIIMLNLACTDLLYLTSLPFLIHYYASGENWIFGDFMCKFIRFSFHFNLYSSILFLTCFSIFRYCVIIHPMSCFSIHKTRCAVVACAVVWIISLVAVIPMTFLITSTNRTNRSACLDLTSSDELNTIKWYNLILTATTFCLPLVIVTLCYTTIIHTLTHGLQTDSCLKQKARRLTILLLLAFYVCFLPFHILRVIRIESRLLSISCSIENQIHEAYIVSRPLAALNTFGNLLLYVVVSDNFQQAVCSTVRCKVSGNLEQAKKISYSNNP.

The Extracellular segment spans residues 1–34; sequence MNEPLDYLANASDFPDYAAAFGNCTDENIPLKMH. N-linked (GlcNAc...) asparagine glycosylation is found at N10 and N23. A helical membrane pass occupies residues 35 to 55; sequence YLPVIYGIIFLVGFPGNAVVI. The Cytoplasmic portion of the chain corresponds to 56-69; it reads STYIFKMRPWKSST. A helical transmembrane segment spans residues 70–90; it reads IIMLNLACTDLLYLTSLPFLI. At 91–116 the chain is on the extracellular side; the sequence is HYYASGENWIFGDFMCKFIRFSFHFN. A disulfide bridge connects residues C106 and C183. Residues 117–137 form a helical membrane-spanning segment; sequence LYSSILFLTCFSIFRYCVIIH. At 138 to 151 the chain is on the cytoplasmic side; sequence PMSCFSIHKTRCAV. The chain crosses the membrane as a helical span at residues 152-172; the sequence is VACAVVWIISLVAVIPMTFLI. Residues 173-201 lie on the Extracellular side of the membrane; that stretch reads TSTNRTNRSACLDLTSSDELNTIKWYNLI. N176 and N179 each carry an N-linked (GlcNAc...) asparagine glycan. Residues 202–222 form a helical membrane-spanning segment; the sequence is LTATTFCLPLVIVTLCYTTII. Residues 223–242 lie on the Cytoplasmic side of the membrane; that stretch reads HTLTHGLQTDSCLKQKARRL. The helical transmembrane segment at 243-263 threads the bilayer; it reads TILLLLAFYVCFLPFHILRVI. At 264-284 the chain is on the extracellular side; it reads RIESRLLSISCSIENQIHEAY. A helical membrane pass occupies residues 285–305; that stretch reads IVSRPLAALNTFGNLLLYVVV. Over 306–337 the chain is Cytoplasmic; the sequence is SDNFQQAVCSTVRCKVSGNLEQAKKISYSNNP.

Belongs to the G-protein coupled receptor 1 family. In terms of tissue distribution, detected in kidney and, to a lower extent, in placenta. Not detected in brain tissues including the frontal cortex, caudate putamen, thalamus, hypothalamus, hippocampus or pons.

It localises to the cell membrane. Its function is as follows. G protein-coupled receptor for dicarboxylates and amino dicarboxylates. Receptor for itaconate, a metabolite produced by myeloid lineages. In the respiratory epithelium, couples the binding of itaconate to the activation of GNA11 and downstream intracellular Ca(2+) release, leading to mucocilliary clearance of airborne pathogens. Receptor for leukotriene E4 (LTE4) produced by mast cells upon allergic inflammation. Binds with high affinity to LTE4 and elicits mucin release from pulmonary epithelium in response to airborne fungi allergens. Regulates mucin-producing goblet cell homeostasis. Receptor for alpha-ketoglutarate produced by proximal tubule renal cells upon metabolic alkalosis. In an intrarenal paracrine signaling pathway, binds alpha-ketoglutarate and drives transepithelial salt reabsorption and bicarbonate secretion by SLC26A4/pendrin-positive intercalated cells. This is 2-oxoglutarate receptor 1 (OXGR1) from Homo sapiens (Human).